Reading from the N-terminus, the 31-residue chain is Photosystem II reaction center protein T (31 aa).

Residues 3–23 (SVAYIVVLTMALAVLFFAIAF) traverse the membrane as a helical segment.

The protein belongs to the PsbT family. As to quaternary structure, PSII is composed of 1 copy each of membrane proteins PsbA, PsbB, PsbC, PsbD, PsbE, PsbF, PsbH, PsbI, PsbJ, PsbK, PsbL, PsbM, PsbT, PsbX, PsbY, PsbZ, Psb30/Ycf12, peripheral proteins PsbO, CyanoQ (PsbQ), PsbU, PsbV and a large number of cofactors. It forms dimeric complexes.

The protein localises to the cellular thylakoid membrane. Found at the monomer-monomer interface of the photosystem II (PS II) dimer, plays a role in assembly and dimerization of PSII. PSII is a light-driven water plastoquinone oxidoreductase, using light energy to abstract electrons from H(2)O, generating a proton gradient subsequently used for ATP formation. The chain is Photosystem II reaction center protein T from Crocosphaera subtropica (strain ATCC 51142 / BH68) (Cyanothece sp. (strain ATCC 51142)).